Here is a 553-residue protein sequence, read N- to C-terminus: Zinc finger CCHC domain-containing protein 8 homolog (553 aa).

S59 carries the phosphoserine modification. The CCHC-type zinc finger occupies 183-200 (SSCFNCGDTEHSLRDCTK). S292 and S347 each carry phosphoserine. Phosphotyrosine is present on Y356. Residues 388–492 (LEEETEDPPL…APSTPFKASY (105 aa)) form a disordered region. A compositionally biased stretch (pro residues) spans 395–409 (PPLPPSVPPPQPPPP). 2 positions are modified to phosphoserine: S421 and S423. Polar residues-rich tracts occupy residues 444 to 456 (ASHNTTANESKSP) and 473 to 485 (ESGNNEQSRSAPS).

The protein belongs to the ZCCHC8 family.

It is found in the nucleus. Its subcellular location is the nucleoplasm. Its function is as follows. Scaffolding subunit of the trimeric nuclear exosome targeting (NEXT) complex, a complex that directs a subset of non-coding short-lived RNAs for exosomal degradation. The RNA exosome is fundamental for the degradation of RNA in eukaryotic nuclei. May be involved in pre-mRNA splicing. This Drosophila melanogaster (Fruit fly) protein is Zinc finger CCHC domain-containing protein 8 homolog.